The sequence spans 169 residues: ALK and LTK ligand 2a (169 aa).

The N-terminal stretch at 1–25 (MRALRAPVLVMGLVLLICTAAQSDA) is a signal peptide. The segment at 45-68 (ENSADDESAQKTESAPEPKDTHHL) is disordered. Positions 52-67 (SAQKTESAPEPKDTHH) are enriched in basic and acidic residues. Disulfide bonds link C130–C166 and C144–C153.

This sequence belongs to the ALKAL family. As to quaternary structure, homodimer. In terms of tissue distribution, expressed at high level in the notochord and iridophore stripes of the trunk, as well as in the eye and swim bladder.

It localises to the secreted. Its subcellular location is the cell membrane. Cytokine that acts as a physiological ligand for receptor tyrosine kinases LTK and ALK. Required for neural crest cell differentiation and iridophore development during embryonic iridophore development and adult stripe development by acting as a receptor for LTK. The protein is ALK and LTK ligand 2a of Danio rerio (Zebrafish).